A 352-amino-acid polypeptide reads, in one-letter code: DNA polymerase IV (352 aa).

One can recognise a UmuC domain in the interval 4–185 (IIHVDMDCFF…LPLSKIPGVG (182 aa)). Positions 8 and 103 each coordinate Mg(2+). Glutamate 104 is a catalytic residue.

Belongs to the DNA polymerase type-Y family. Monomer. Mg(2+) serves as cofactor.

The protein resides in the cytoplasm. It catalyses the reaction DNA(n) + a 2'-deoxyribonucleoside 5'-triphosphate = DNA(n+1) + diphosphate. In terms of biological role, poorly processive, error-prone DNA polymerase involved in untargeted mutagenesis. Copies undamaged DNA at stalled replication forks, which arise in vivo from mismatched or misaligned primer ends. These misaligned primers can be extended by PolIV. Exhibits no 3'-5' exonuclease (proofreading) activity. May be involved in translesional synthesis, in conjunction with the beta clamp from PolIII. The sequence is that of DNA polymerase IV from Yersinia enterocolitica serotype O:8 / biotype 1B (strain NCTC 13174 / 8081).